The chain runs to 485 residues: NADH-quinone oxidoreductase subunit N (485 aa).

14 helical membrane-spanning segments follow: residues 8 to 28 (LIALSPLLIVGLTVVVVMLCI), 35 to 55 (FVNATMTVIGLNIALLSLYFV), 75 to 95 (FYTGLVLLASLATSTFAYPWL), 105 to 125 (FYLLVLIAALGGILLSSANHL), 127 to 147 (SLFIGIELLSLPLFGLVGYAF), 159 to 179 (YMLLSAAASSFLLFGMALIYA), 203 to 223 (LLAGLGMMIVGLGFKLSLVPF), 235 to 255 (PAPVSTFLATAGKIAVFGAVM), 271 to 291 (IVLSIIAFASIMFGNVMAVSQ), 297 to 317 (LLGYSSIAHLGYLLVALIAVQ), 326 to 346 (VGVYLVGYLFSSLGAFGVVSL), 374 to 394 (AVMTVMMLSLAGIPMTLGFFG), 407 to 426 (LWWLTGAVVLGSAIGLYYYL), and 449 to 469 (ALTAGGVVVLISSIVVLFFGL).

It belongs to the complex I subunit 2 family. NDH-1 is composed of 13 different subunits. Subunits NuoA, H, J, K, L, M, N constitute the membrane sector of the complex.

It localises to the cell inner membrane. The enzyme catalyses a quinone + NADH + 5 H(+)(in) = a quinol + NAD(+) + 4 H(+)(out). Its function is as follows. NDH-1 shuttles electrons from NADH, via FMN and iron-sulfur (Fe-S) centers, to quinones in the respiratory chain. The immediate electron acceptor for the enzyme in this species is believed to be ubiquinone. Couples the redox reaction to proton translocation (for every two electrons transferred, four hydrogen ions are translocated across the cytoplasmic membrane), and thus conserves the redox energy in a proton gradient. In Pectobacterium atrosepticum (strain SCRI 1043 / ATCC BAA-672) (Erwinia carotovora subsp. atroseptica), this protein is NADH-quinone oxidoreductase subunit N.